The chain runs to 176 residues: Nicotinamide-nucleotide adenylyltransferase (176 aa).

This sequence belongs to the archaeal NMN adenylyltransferase family.

The protein resides in the cytoplasm. The enzyme catalyses beta-nicotinamide D-ribonucleotide + ATP + H(+) = diphosphate + NAD(+). It participates in cofactor biosynthesis; NAD(+) biosynthesis; NAD(+) from nicotinamide D-ribonucleotide: step 1/1. This Halorubrum lacusprofundi (strain ATCC 49239 / DSM 5036 / JCM 8891 / ACAM 34) protein is Nicotinamide-nucleotide adenylyltransferase.